An 86-amino-acid chain; its full sequence is Small nuclear ribonucleoprotein F (86 aa).

At Ser-2 the chain carries N-acetylserine. Residues 6 to 78 (NPKPFLNGLT…VLYIRGVEEE (73 aa)) form the Sm domain.

The protein belongs to the snRNP Sm proteins family. SmF/LSm6 subfamily. Core component of the spliceosomal U1, U2, U4 and U5 small nuclear ribonucleoproteins (snRNPs), the building blocks of the spliceosome. Most spliceosomal snRNPs contain a common set of Sm proteins, SNRPB, SNRPD1, SNRPD2, SNRPD3, SNRPE, SNRPF and SNRPG that assemble in a heptameric protein ring on the Sm site of the small nuclear RNA to form the core snRNP. Component of the U1 snRNP. The U1 snRNP is composed of the U1 snRNA and the 7 core Sm proteins SNRPB, SNRPD1, SNRPD2, SNRPD3, SNRPE, SNRPF and SNRPG, and at least three U1 snRNP-specific proteins SNRNP70/U1-70K, SNRPA/U1-A and SNRPC/U1-C. Component of the U4/U6-U5 tri-snRNP complex composed of the U4, U6 and U5 snRNAs and at least PRPF3, PRPF4, PRPF6, PRPF8, PRPF31, SNRNP200, TXNL4A, SNRNP40, SNRPB, SNRPD1, SNRPD2, SNRPD3, SNRPE, SNRPF, SNRPG, DDX23, CD2BP2, PPIH, SNU13, EFTUD2, SART1 and USP39, plus LSM2, LSM3, LSM4, LSM5, LSM6, LSM7 and LSM8. Component of the U7 snRNP complex, or U7 Sm protein core complex, that is composed of the U7 snRNA and at least LSM10, LSM11, SNRPB, SNRPD3, SNRPE, SNRPF and SNRPG; the complex does not contain SNRPD1 and SNRPD2. Component of the minor spliceosome, which splices U12-type introns. Part of the SMN-Sm complex that contains SMN1, GEMIN2/SIP1, DDX20/GEMIN3, GEMIN4, GEMIN5, GEMIN6, GEMIN7, GEMIN8, STRAP/UNRIP and the Sm proteins SNRPB, SNRPD1, SNRPD2, SNRPD3, SNRPE, SNRPF and SNRPG; catalyzes core snRNPs assembly. Forms a 6S pICln-Sm complex composed of CLNS1A/pICln, SNRPD1, SNRPD2, SNRPE, SNRPF and SNRPG; ring-like structure where CLNS1A/pICln mimics additional Sm proteins and which is unable to assemble into the core snRNP. Interacts with GEMIN2 (via N-terminus); the interaction is direct. Interacts with SNRPD2; the interaction is direct. Interacts with SNRPE; the interaction is direct.

It localises to the cytoplasm. The protein localises to the cytosol. It is found in the nucleus. In terms of biological role, plays a role in pre-mRNA splicing as a core component of the spliceosomal U1, U2, U4 and U5 small nuclear ribonucleoproteins (snRNPs), the building blocks of the spliceosome. Component of both the pre-catalytic spliceosome B complex and activated spliceosome C complexes. As a component of the minor spliceosome, involved in the splicing of U12-type introns in pre-mRNAs. As part of the U7 snRNP it is involved in histone 3'-end processing. This Homo sapiens (Human) protein is Small nuclear ribonucleoprotein F (SNRPF).